We begin with the raw amino-acid sequence, 429 residues long: Phosphoribosylamine--glycine ligase (429 aa).

The 208-residue stretch at 109–316 (KDFLARHKIP…LVELCLAACE (208 aa)) folds into the ATP-grasp domain. Residue 135–196 (LREKGAPIVI…EEFLDGEEAS (62 aa)) participates in ATP binding. A disordered region spans residues 212 to 236 (SQDHKRVGDKDTGPNTGGMGAYSPA). The span at 213–223 (QDHKRVGDKDT) shows a compositional bias: basic and acidic residues. The Mg(2+) site is built by Glu286 and Asn288.

Belongs to the GARS family. In terms of assembly, monomer. It depends on Mg(2+) as a cofactor. The cofactor is Mn(2+).

It catalyses the reaction 5-phospho-beta-D-ribosylamine + glycine + ATP = N(1)-(5-phospho-beta-D-ribosyl)glycinamide + ADP + phosphate + H(+). It participates in purine metabolism; IMP biosynthesis via de novo pathway; N(1)-(5-phospho-D-ribosyl)glycinamide from 5-phospho-alpha-D-ribose 1-diphosphate: step 2/2. In terms of biological role, catalyzes the reversible conversion of phosphoribosylamine to glycinamide ribonucleotide, an enzymatic step in purine biosynthesis pathway. In Escherichia coli (strain K12), this protein is Phosphoribosylamine--glycine ligase (purD).